A 145-amino-acid polypeptide reads, in one-letter code: D-aminoacyl-tRNA deacylase (145 aa).

Residues 137–138 (GP) carry the Gly-cisPro motif, important for rejection of L-amino acids motif.

The protein belongs to the DTD family. In terms of assembly, homodimer.

The protein resides in the cytoplasm. The enzyme catalyses glycyl-tRNA(Ala) + H2O = tRNA(Ala) + glycine + H(+). It catalyses the reaction a D-aminoacyl-tRNA + H2O = a tRNA + a D-alpha-amino acid + H(+). In terms of biological role, an aminoacyl-tRNA editing enzyme that deacylates mischarged D-aminoacyl-tRNAs. Also deacylates mischarged glycyl-tRNA(Ala), protecting cells against glycine mischarging by AlaRS. Acts via tRNA-based rather than protein-based catalysis; rejects L-amino acids rather than detecting D-amino acids in the active site. By recycling D-aminoacyl-tRNA to D-amino acids and free tRNA molecules, this enzyme counteracts the toxicity associated with the formation of D-aminoacyl-tRNA entities in vivo and helps enforce protein L-homochirality. This Shewanella piezotolerans (strain WP3 / JCM 13877) protein is D-aminoacyl-tRNA deacylase.